The following is a 326-amino-acid chain: Cyclin-dependent kinase B2-1 (326 aa).

Residues Y28–F318 enclose the Protein kinase domain. ATP-binding positions include V34 to V42 and K57. Position 38 is a phosphothreonine (T38). Y39 carries the post-translational modification Phosphotyrosine. Catalysis depends on D159, which acts as the Proton acceptor. T193 is subject to Phosphothreonine.

It belongs to the protein kinase superfamily. CMGC Ser/Thr protein kinase family. CDC2/CDKX subfamily. In terms of assembly, interacts with CYCB2-1 and CYCB2-2. Binding to CYCB2-1 or CYCB2-2 activates CDK kinase. In terms of tissue distribution, expressed in the dividing region of the root apex and the intercalary meristem of internodes.

The protein localises to the nucleus. Its subcellular location is the cytoplasm. It localises to the cytoskeleton. It is found in the spindle. The protein resides in the phragmoplast. The enzyme catalyses L-seryl-[protein] + ATP = O-phospho-L-seryl-[protein] + ADP + H(+). It carries out the reaction L-threonyl-[protein] + ATP = O-phospho-L-threonyl-[protein] + ADP + H(+). The catalysed reaction is [DNA-directed RNA polymerase] + ATP = phospho-[DNA-directed RNA polymerase] + ADP + H(+). Its function is as follows. Forms a complex with CYCB2-1 or CYCB2-2 that activates CDK kinase in tobacco BY2 cells during G2/M (mitosis) phases. May be involved in the regulation of the cell cycle at the G2/M transition. In Oryza sativa subsp. japonica (Rice), this protein is Cyclin-dependent kinase B2-1 (CDKB2-1).